The primary structure comprises 185 residues: CASP-like protein 2C1 (185 aa).

Over 1-12 the chain is Cytoplasmic; the sequence is MVAARVSEVKAE. Residues 13-33 traverse the membrane as a helical segment; it reads GVLRGACAALAAAAALLVGLS. The Extracellular portion of the chain corresponds to 34 to 52; it reads TQTETVLLVRKKATVKDVQ. A helical transmembrane segment spans residues 53–73; it reads ALWVLAMAAAAAAGYHLLQLL. Residues 74–105 lie on the Cytoplasmic side of the membrane; the sequence is KCFYLGRRVGGGASPCRRSSRALAWTCLLLDK. Residues 106–126 form a helical membrane-spanning segment; it reads ACAYTTFATTVAAAQACVIAL. Residues 127–147 are Extracellular-facing; sequence DGAHALQWTKLCNIYTRFCEQ. Residues 148-168 traverse the membrane as a helical segment; sequence IAGSLVLGMLAAVGTAVLSAA. The Cytoplasmic portion of the chain corresponds to 169-185; the sequence is SARNVFRHYSPGTYAAH.

The protein belongs to the Casparian strip membrane proteins (CASP) family. Homodimer and heterodimers.

It localises to the cell membrane. This Sorghum bicolor (Sorghum) protein is CASP-like protein 2C1.